A 172-amino-acid polypeptide reads, in one-letter code: MERAIQGNDAREQAYGERWNGGSGSSTSPFKLPDESPSWTEWRLHNDETISNQDNPLGFKESWGFGKVVFKRYLRYERTETSLHRVLGSWTGDSVNYAASRFLGFDQIGCTYSIRFRGVSVTISGGSRTLQHLSEMAIRSKQELLQLTPVEVESDVSRGCPEGIETFKEESE.

The segment covering 1 to 15 (MERAIQGNDAREQAY) has biased composition (basic and acidic residues). The tract at residues 1-37 (MERAIQGNDAREQAYGERWNGGSGSSTSPFKLPDESP) is disordered.

The protein belongs to the tombusvirus protein p19 family. In terms of assembly, homodimer.

Viral suppressor of RNA silencing which binds specifically to silencing RNAs (siRNAs). Acts as a molecular caliper to specifically select siRNAs based on the length of the duplex region of the RNA. In Capsicum annuum (Capsicum pepper), this protein is RNA silencing suppressor p19.